The primary structure comprises 120 residues: Large ribosomal subunit protein bL21 (120 aa).

It belongs to the bacterial ribosomal protein bL21 family. In terms of assembly, part of the 50S ribosomal subunit. Contacts protein L20.

In terms of biological role, this protein binds to 23S rRNA in the presence of protein L20. The polypeptide is Large ribosomal subunit protein bL21 (Roseiflexus sp. (strain RS-1)).